Here is a 1096-residue protein sequence, read N- to C-terminus: Protein spire (1096 aa).

2 disordered regions span residues 1 to 79 and 184 to 211; these read MTEH…GNGT and VESQ…TSSV. Positions 37 to 51 are enriched in polar residues; sequence LSTSPDSANGDAQQA. Basic residues predominate over residues 53–65; sequence THTHIISHTHSKG. Composition is skewed to low complexity over residues 66 to 77 and 189 to 201; these read AAKTQTQTQNGN and QEAS…QKQP. Residues 111-366 form the KIND domain; that stretch reads VTLNNILDSF…RALATETIEL (256 aa). Residues 315–340 adopt a coiled-coil conformation; the sequence is KRWDDEAEEERNDTKELEHIIETCRN. WH2 domains lie at 436 to 454 and 500 to 517; these read PYEI…LRKV and PREQ…LKQI. 3 disordered regions span residues 560–588, 614–656, and 693–762; these read DDSS…AHLA, QECQ…PSFT, and QSNL…LGPW. The span at 574 to 585 shows a compositional bias: basic residues; the sequence is HQHHQQHQPHHA. 2 stretches are compositionally biased toward low complexity: residues 633–645 and 714–725; these read APRQ…QAQA and DAGSQSQSGASS. Residues 737 to 754 are compositionally biased toward basic and acidic residues; it reads EGDHSQTTDGPPRLDEAH. Residues 780 to 800 form a spir-box region; sequence LSVTLAEIVHIRSVMTKAELE. The span at 874–894 shows a compositional bias: low complexity; it reads PASSSTPSPSHHAHQAHSSST. Disordered stretches follow at residues 874–899, 912–958, and 997–1021; these read PASS…NIMD, RSES…APGH, and RSME…SSTL. The segment covering 921 to 941 has biased composition (polar residues); sequence STVGSAPSSPKHQRSNMSTPG.

The protein belongs to the spire family. As to quaternary structure, interacts with bsk, Rho1, Rac1, Cdc42 and wash. Interacts with capu. Phosphorylated by Jnk kinase (bsk).

It localises to the cytoplasm. The protein localises to the cytoskeleton. It is found in the perinuclear region. Its subcellular location is the cell membrane. The protein resides in the cytoplasmic vesicle membrane. Its function is as follows. Acts as an actin nucleation factor, remains associated with the slow-growing pointed end of the new filament. Promotes dissociation of capu from the barbed end of actin filaments. Involved in intracellular vesicle transport along actin fibers, providing a novel link between actin cytoskeleton dynamics and intracellular transport. Required for localization of determinants within the developing oocyte to the posterior pole and to the dorsal anterior corner. Links Rho family signaling and Jnk function to the actin cytoskeleton. This Drosophila pseudoobscura pseudoobscura (Fruit fly) protein is Protein spire.